A 198-amino-acid chain; its full sequence is MKLNENVKIVAEKCVLVPYEPCHVEKYHKWMEDEEIRRLTGSERLSLEEEFEMQKSWREDDDKLTFIVLSREEGEETNRMLGDVNLFISKSENLEEEEDVGEVEVMIAEPRGRGKGIGQEAVSLIISWAFKNLQIARFCVKITEDNAPSLSLFEKKLGFKRVSYSSAFKEITMELPGERLESHFGRFLGENSQILEHK.

The region spanning 34-178 (EEIRRLTGSE…KEITMELPGE (145 aa)) is the N-acetyltransferase domain.

Belongs to the acetyltransferase family. GNAT subfamily.

In Caenorhabditis briggsae, this protein is N-acetyltransferase 9-like protein.